The primary structure comprises 880 residues: Pyruvate, phosphate dikinase (880 aa).

The segment at 1–348 (MNKLIYYFGN…LYILQTRTAK (348 aa)) is N-terminal. Residue R97 participates in ATP binding. The linker 1 stretch occupies residues 349–405 (RTAIAAINIAVQMVEEKLISKEQALMRIDPESLNQLLHTRIDYSKKLTAIAEGLPAS). Residues 406 to 503 (PGAATGIVVF…VIKQGDIITI (98 aa)) form a central region. Phosphothreonine; by PDRP1 is present on T458. H460 (tele-phosphohistidine intermediate) is an active-site residue. Residues 504–538 (DGGSGKIFLGEMPLIQPTFSEESTLILDWADEISS) form a linker 2 region. The segment at 539-879 (LKVRANAETV…AAAQAKIKQG (341 aa)) is C-terminal. Residues R566, R622, E750, G771, T772, N773, and D774 each coordinate substrate. E750 contacts Mg(2+). D774 contacts Mg(2+). C836 (proton donor) is an active-site residue.

This sequence belongs to the PEP-utilizing enzyme family. As to quaternary structure, homodimer. The cofactor is Mg(2+). Phosphorylation of Thr-458 in the dark inactivates the enzyme. Dephosphorylation upon light stimulation reactivates the enzyme.

It carries out the reaction pyruvate + phosphate + ATP = phosphoenolpyruvate + AMP + diphosphate + H(+). Its activity is regulated as follows. Activated by light-induced dephosphorylation. Inhibited by dark-induced phosphorylation. Both reactions are catalyzed by PDRP1. Its function is as follows. Catalyzes the reversible phosphorylation of pyruvate and phosphate. The sequence is that of Pyruvate, phosphate dikinase (ppdK) from Rickettsia typhi (strain ATCC VR-144 / Wilmington).